The sequence spans 162 residues: L-amino acid N-acetyltransferase AaaT (162 aa).

In terms of domain architecture, N-acetyltransferase spans 4-162 (IVIRHAETRD…VDAYYMARVK (159 aa)).

It belongs to the acetyltransferase family.

It catalyses the reaction L-phenylalanine + acetyl-CoA = N-acetyl-L-phenylalanine + CoA + H(+). It carries out the reaction L-methionine + acetyl-CoA = N-acetyl-L-methionine + CoA + H(+). Catalyzes the N-acetylation of L-phenylalanine and L-methionine using acetyl-CoA as acetyl donor in vitro. Cannot accept L-tyrosine as substrate and propionyl-CoA, succinyl-CoA or (S)-methylmalonyl-CoA as acyl donors. Is also able to acetylate and thus detoxify several nonhydrolyzable aminoacyl adenylates, but not the processed form of the peptide-nucleotide antibiotic microcin C (McC). When overproduced, provides complete resistance to leucyl sulfamoyl adenylate (LSA) and partial resistance to alanyl sulfamoyl adenylate (ASA) and phenylalanyl sulfamoyl adenylate (FSA). Therefore, may protect bacteria from various toxic aminoacyl nucleotides, either exogenous or those generated inside the cell during normal metabolism. This chain is L-amino acid N-acetyltransferase AaaT, found in Escherichia coli (strain K12).